The sequence spans 261 residues: Glucose 1-dehydrogenase 4 (261 aa).

11–35 (VITGGSTGLGRAMAVRFGQEEAKVV) contributes to the NAD(+) binding site. Ser-145 serves as a coordination point for substrate. Tyr-158 functions as the Proton acceptor in the catalytic mechanism.

It belongs to the short-chain dehydrogenases/reductases (SDR) family. As to quaternary structure, homotetramer.

The enzyme catalyses D-glucose + NAD(+) = D-glucono-1,5-lactone + NADH + H(+). The catalysed reaction is D-glucose + NADP(+) = D-glucono-1,5-lactone + NADPH + H(+). The sequence is that of Glucose 1-dehydrogenase 4 (gdhIV) from Priestia megaterium (Bacillus megaterium).